The sequence spans 133 residues: Probable non-specific lipid-transfer protein 2 (133 aa).

The signal sequence occupies residues 1 to 31 (MRTVSMAALVVIAAALAWTSSAELASAPAPG). Cystine bridges form between Cys35–Cys83, Cys45–Cys60, Cys61–Cys106, and Cys81–Cys121.

The protein belongs to the plant LTP family.

Plant non-specific lipid-transfer proteins transfer phospholipids as well as galactolipids across membranes. May play a role in wax or cutin deposition in the cell walls of expanding epidermal cells and certain secretory tissues. The polypeptide is Probable non-specific lipid-transfer protein 2 (Parietaria judaica (Pellitory-of-the-wall)).